The sequence spans 274 residues: Large ribosomal subunit protein uL2cz/uL2cy (274 aa).

2 disordered regions span residues 1 to 23 (MAIH…SQVK) and 223 to 274 (MNPV…RRSK).

It belongs to the universal ribosomal protein uL2 family. As to quaternary structure, part of the 50S ribosomal subunit.

The protein localises to the plastid. The protein resides in the chloroplast. This is Large ribosomal subunit protein uL2cz/uL2cy (rpl2-A) from Ranunculus macranthus (Large buttercup).